The following is a 597-amino-acid chain: Sodium/mannose cotransporter SLC5A10 (597 aa).

At 1-16 the chain is on the extracellular side; the sequence is MVADNSTSDPHAPGPQ. The N-linked (GlcNAc...) asparagine glycan is linked to N5. Residues 17 to 37 traverse the membrane as a helical segment; sequence LSVTDIVVITVYFALNVAVGI. The Cytoplasmic portion of the chain corresponds to 38–73; sequence WSSCRASRNTVSGYFLAGRDMTWWPIGASLFGSSEG. S49 is subject to Phosphoserine. Residues 74-94 form a helical membrane-spanning segment; it reads SGLFIGLAGSGAAGGLAVAGF. Over 95-100 the chain is Extracellular; the sequence is DWNATY. A helical transmembrane segment spans residues 101–121; sequence VLLALAWVFGAIYISSEIVTL. Residues 122–137 are Cytoplasmic-facing; that stretch reads AEYIQKRFGGQRIRMY. The chain crosses the membrane as a helical span at residues 138 to 158; that stretch reads LSVLSLLLSVFTKISLDLYAG. The Extracellular portion of the chain corresponds to 159 to 171; that stretch reads ALFVHICLGWNFY. The chain crosses the membrane as a helical span at residues 172 to 194; that stretch reads LSTILTLTITALYTITGGLVAVI. At 195–200 the chain is on the cytoplasmic side; the sequence is YTDALQ. Residues 201-219 form a helical membrane-spanning segment; it reads TLIMVVGAVILAIKAFHQI. Residues 220–265 lie on the Extracellular side of the membrane; sequence DGYGQMEAAYARAIPSRTVANTTCHLPRADAMHMFRDPYTGDLPWT. A helical transmembrane segment spans residues 266–286; sequence GMTFGLTIMATWYWCTDQVIV. At 287-301 the chain is on the cytoplasmic side; it reads QRSLSARNLNHAKAG. Residues 302 to 322 form a helical membrane-spanning segment; that stretch reads SILASYLKMLPMGLMIMPGMI. The Extracellular segment spans residues 323-367; the sequence is SRALFPDEVGCVVPSECLRACGAEIGCSNIAYPKLVMELMPVGLR. Residues 368–390 form a helical membrane-spanning segment; it reads GLMIAVMMPALMSSLSSIFNSSS. The Cytoplasmic portion of the chain corresponds to 391–410; that stretch reads TLFTMDIWRRLRPCASEREL. The chain crosses the membrane as a helical span at residues 411–431; the sequence is LLVGRLVIVVLIGVSVAWIPV. Topologically, residues 432–444 are extracellular; sequence LQGSNGGQLFIYM. The chain crosses the membrane as a helical span at residues 445 to 465; that stretch reads QSVTSSLAPPVTAVFTLGIFW. At 466–472 the chain is on the cytoplasmic side; that stretch reads QRANEQG. The helical transmembrane segment at 473 to 493 threads the bilayer; sequence AFWGLLAGLAVGATRLVLEFL. Topologically, residues 494–514 are extracellular; the sequence is HPAPPCGAADTRPAVLSQLHY. The helical transmembrane segment at 515–535 threads the bilayer; it reads LHFAVALFVLTGAVAVGGSLL. The Cytoplasmic segment spans residues 536–576; the sequence is TPPPRRHQIENLTWWTLTRDLSLGAKAGDGQTPQRYTFWAR. Residues 577–597 form a helical membrane-spanning segment; it reads VCGFNAILLMCVNIFFYAYFA.

This sequence belongs to the sodium:solute symporter (SSF) (TC 2.A.21) family. As to expression, expressed only in kidney.

The protein localises to the apical cell membrane. The enzyme catalyses D-mannose(out) + Na(+)(out) = D-mannose(in) + Na(+)(in). The catalysed reaction is D-fructopyranose(out) + Na(+)(out) = D-fructopyranose(in) + Na(+)(in). Electrogenic Na+-coupled sugar symporter that actively transports D-mannose or D-fructose at the plasma membrane, with a Na+ to sugar coupling ratio of 1:1. Transporter activity is driven by a transmembrane Na+ electrochemical gradient set by the Na+/K+ pump. Exclusively recognizes sugar substrates having a pyranose ring with an axial hydroxyl group on carbon 2. Has likely evolved to enable renal reabsorption of D-mannose, an important constituent of oligosaccharide chains of glycoproteins. Contributes to dietary D-fructose reabsorption from glomerular filtrate across the brush border of the kidney. This chain is Sodium/mannose cotransporter SLC5A10 (SLC5A10), found in Oryctolagus cuniculus (Rabbit).